Consider the following 227-residue polypeptide: Cytochrome c oxidase subunit 2 (227 aa).

Over 1-14 the chain is Mitochondrial intermembrane; sequence MAHAVQYGFQDAAA. A helical membrane pass occupies residues 15-45; the sequence is PIMEELLYFHDHTLMIVFMISSLVLYIISLM. The Mitochondrial matrix portion of the chain corresponds to 46–59; that stretch reads LSTELTHTSTMDAQ. Residues 60-87 traverse the membrane as a helical segment; sequence EVETVWTILPAVILILIALPSLRILYMM. The Mitochondrial intermembrane portion of the chain corresponds to 88–227; the sequence is DEIETPSLTL…YFEEWLLKTL (140 aa). 6 residues coordinate Cu cation: H161, C196, E198, C200, H204, and M207. E198 provides a ligand contact to Mg(2+). Y218 carries the post-translational modification Phosphotyrosine.

This sequence belongs to the cytochrome c oxidase subunit 2 family. In terms of assembly, component of the cytochrome c oxidase (complex IV, CIV), a multisubunit enzyme composed of 14 subunits. The complex is composed of a catalytic core of 3 subunits MT-CO1, MT-CO2 and MT-CO3, encoded in the mitochondrial DNA, and 11 supernumerary subunits COX4I, COX5A, COX5B, COX6A, COX6B, COX6C, COX7A, COX7B, COX7C, COX8 and NDUFA4, which are encoded in the nuclear genome. The complex exists as a monomer or a dimer and forms supercomplexes (SCs) in the inner mitochondrial membrane with NADH-ubiquinone oxidoreductase (complex I, CI) and ubiquinol-cytochrome c oxidoreductase (cytochrome b-c1 complex, complex III, CIII), resulting in different assemblies (supercomplex SCI(1)III(2)IV(1) and megacomplex MCI(2)III(2)IV(2)). Found in a complex with TMEM177, COA6, COX18, COX20, SCO1 and SCO2. Interacts with TMEM177 in a COX20-dependent manner. Interacts with COX20. Interacts with COX16. Cu cation is required as a cofactor.

The protein localises to the mitochondrion inner membrane. It carries out the reaction 4 Fe(II)-[cytochrome c] + O2 + 8 H(+)(in) = 4 Fe(III)-[cytochrome c] + 2 H2O + 4 H(+)(out). In terms of biological role, component of the cytochrome c oxidase, the last enzyme in the mitochondrial electron transport chain which drives oxidative phosphorylation. The respiratory chain contains 3 multisubunit complexes succinate dehydrogenase (complex II, CII), ubiquinol-cytochrome c oxidoreductase (cytochrome b-c1 complex, complex III, CIII) and cytochrome c oxidase (complex IV, CIV), that cooperate to transfer electrons derived from NADH and succinate to molecular oxygen, creating an electrochemical gradient over the inner membrane that drives transmembrane transport and the ATP synthase. Cytochrome c oxidase is the component of the respiratory chain that catalyzes the reduction of oxygen to water. Electrons originating from reduced cytochrome c in the intermembrane space (IMS) are transferred via the dinuclear copper A center (CU(A)) of subunit 2 and heme A of subunit 1 to the active site in subunit 1, a binuclear center (BNC) formed by heme A3 and copper B (CU(B)). The BNC reduces molecular oxygen to 2 water molecules using 4 electrons from cytochrome c in the IMS and 4 protons from the mitochondrial matrix. The sequence is that of Cytochrome c oxidase subunit 2 (MT-CO2) from Galago senegalensis (Northern lesser bushbaby).